We begin with the raw amino-acid sequence, 868 residues long: uncharacterized protein (868 aa).

The protein resides in the cytoplasm. Its subcellular location is the nucleus. This is an uncharacterized protein from Schizosaccharomyces pombe (strain 972 / ATCC 24843) (Fission yeast).